The following is a 540-amino-acid chain: CTP synthase (540 aa).

The amidoligase domain stretch occupies residues 1–267; that stretch reads MKIMKFIFIT…GKLVTKKLNL (267 aa). Serine 15 contributes to the CTP binding site. Serine 15 is a binding site for UTP. 16–21 serves as a coordination point for ATP; the sequence is SLGKGI. An L-glutamine-binding site is contributed by tyrosine 56. Position 73 (aspartate 73) interacts with ATP. Mg(2+)-binding residues include aspartate 73 and glutamate 141. CTP-binding positions include 148-150, 188-193, and lysine 224; these read DIE and KTKPTQ. UTP contacts are provided by residues 188–193 and lysine 224; that span reads KTKPTQ. Position 240–242 (240–242) interacts with ATP; it reads RDA. The region spanning 292–540 is the Glutamine amidotransferase type-1 domain; the sequence is TIGIVGKYVE…VRASLGEKIK (249 aa). An L-glutamine-binding site is contributed by glycine 360. Cysteine 387 functions as the Nucleophile; for glutamine hydrolysis in the catalytic mechanism. Residues 388–391, glutamate 411, and arginine 468 each bind L-glutamine; that span reads MGMQ. Catalysis depends on residues histidine 513 and glutamate 515.

Belongs to the CTP synthase family. Homotetramer.

The catalysed reaction is UTP + L-glutamine + ATP + H2O = CTP + L-glutamate + ADP + phosphate + 2 H(+). It catalyses the reaction L-glutamine + H2O = L-glutamate + NH4(+). It carries out the reaction UTP + NH4(+) + ATP = CTP + ADP + phosphate + 2 H(+). It functions in the pathway pyrimidine metabolism; CTP biosynthesis via de novo pathway; CTP from UDP: step 2/2. Allosterically activated by GTP, when glutamine is the substrate; GTP has no effect on the reaction when ammonia is the substrate. The allosteric effector GTP functions by stabilizing the protein conformation that binds the tetrahedral intermediate(s) formed during glutamine hydrolysis. Inhibited by the product CTP, via allosteric rather than competitive inhibition. Catalyzes the ATP-dependent amination of UTP to CTP with either L-glutamine or ammonia as the source of nitrogen. Regulates intracellular CTP levels through interactions with the four ribonucleotide triphosphates. This chain is CTP synthase, found in Methanocaldococcus jannaschii (strain ATCC 43067 / DSM 2661 / JAL-1 / JCM 10045 / NBRC 100440) (Methanococcus jannaschii).